The primary structure comprises 1166 residues: Serine-aspartate repeat-containing protein E (1166 aa).

Residues 1–52 form the signal peptide; the sequence is MINRDNKKAITKKGMISNRLNKFSIRKYTVGTASILVGTTLIFGLGNQEAKA. Residues 23 to 34 carry the YSIRK-G/S signaling motif motif; that stretch reads FSIRKYTVGTAS. The interval 53-606 is ligand binding A region; the sequence is AENTSTENAK…GDGTVKPEEK (554 aa). Residues 54-230 form a disordered region; sequence ENTSTENAKQ…SKEELKNNPE (177 aa). Residues 61–75 show a composition bias toward basic and acidic residues; sequence AKQDDATTSDNKEVV. Low complexity predominate over residues 77 to 90; sequence ETENNSTTENNSTN. Over residues 92–108 the composition is skewed to basic and acidic residues; sequence IKKETNTDSQPEAKKES. Polar residues predominate over residues 118-129; it reads NNVTATTETKPQ. Positions 130-145 are enriched in basic and acidic residues; the sequence is NIEKENVKPSTDKTAT. Residues 166–178 show a composition bias toward low complexity; that stretch reads TTKPSTSEPSTSE. Polar residues predominate over residues 179-212; that stretch reads IQTKPTTPQESTNIENSQPQPTPSKVDNQVTDAT. Over residues 221-230 the composition is skewed to basic and acidic residues; sequence SKEELKNNPE. CNA-B domains follow at residues 607–719, 720–829, and 830–940; these read LYKI…YKEP, KYNL…YKTP, and KYSL…EEDT. Positions 904 to 1141 are disordered; that stretch reads VTNTTEDDKD…TGSENNGSNN (238 aa). 2 stretches are compositionally biased toward acidic residues: residues 908-918 and 935-1105; these read TEDDKDADGGE and YFEE…DSDS. The short motif at 1129–1133 is the LPXTG sorting signal element; sequence LPETG. Thr1132 carries the post-translational modification Pentaglycyl murein peptidoglycan amidated threonine. The propeptide at 1133–1166 is removed by sortase; sequence GSENNGSNNATLFGGLFAALGSLLLFGRRKKQNK.

The protein belongs to the serine-aspartate repeat-containing protein (SDr) family. Interacts with host complement factor H/CFAH (via C-terminus). Interacts with host complement regulator C4BPA.

The protein resides in the secreted. It is found in the cell wall. In terms of biological role, cell surface-associated calcium-binding protein which plays an important role in adhesion and pathogenesis. Contributes to the resistance to killing by innate immune components in blood and thus attenuates bacterial clearance by interacting with host complement factor H/CFAH and modulating its activity. Inhibits also bacterial opsonization and killing by interacting with host complement regulator C4BPA and thus inhibiting classical complement pathway activation. The protein is Serine-aspartate repeat-containing protein E (sdrE) of Staphylococcus aureus (strain Newman).